We begin with the raw amino-acid sequence, 200 residues long: ATP-dependent Clp protease proteolytic subunit (200 aa).

Ser-103 functions as the Nucleophile in the catalytic mechanism. His-128 is a catalytic residue.

It belongs to the peptidase S14 family. As to quaternary structure, fourteen ClpP subunits assemble into 2 heptameric rings which stack back to back to give a disk-like structure with a central cavity, resembling the structure of eukaryotic proteasomes.

The protein resides in the cytoplasm. The enzyme catalyses Hydrolysis of proteins to small peptides in the presence of ATP and magnesium. alpha-casein is the usual test substrate. In the absence of ATP, only oligopeptides shorter than five residues are hydrolyzed (such as succinyl-Leu-Tyr-|-NHMec, and Leu-Tyr-Leu-|-Tyr-Trp, in which cleavage of the -Tyr-|-Leu- and -Tyr-|-Trp bonds also occurs).. Cleaves peptides in various proteins in a process that requires ATP hydrolysis. Has a chymotrypsin-like activity. Plays a major role in the degradation of misfolded proteins. This Vibrio vulnificus (strain CMCP6) protein is ATP-dependent Clp protease proteolytic subunit.